We begin with the raw amino-acid sequence, 164 residues long: Phosphopantetheine adenylyltransferase (164 aa).

S9 contributes to the substrate binding site. ATP contacts are provided by residues 9–10 (SF) and H17. The substrate site is built by K41, L73, and K87. ATP contacts are provided by residues 88-90 (GLR), E98, and 122-128 (YSYLSSS).

Belongs to the bacterial CoaD family. Homohexamer. Mg(2+) serves as cofactor.

It is found in the cytoplasm. It catalyses the reaction (R)-4'-phosphopantetheine + ATP + H(+) = 3'-dephospho-CoA + diphosphate. Its pathway is cofactor biosynthesis; coenzyme A biosynthesis; CoA from (R)-pantothenate: step 4/5. Functionally, reversibly transfers an adenylyl group from ATP to 4'-phosphopantetheine, yielding dephospho-CoA (dPCoA) and pyrophosphate. The protein is Phosphopantetheine adenylyltransferase of Rhodococcus erythropolis (strain PR4 / NBRC 100887).